Reading from the N-terminus, the 367-residue chain is 3-dehydroquinate synthase (367 aa).

NAD(+) contacts are provided by residues 111 to 115, 135 to 136, Lys148, Lys157, and 175 to 178; these read GVVGD, TS, and TLDT. Zn(2+) is bound by residues Glu190, His254, and His271.

It belongs to the sugar phosphate cyclases superfamily. Dehydroquinate synthase family. It depends on Co(2+) as a cofactor. The cofactor is Zn(2+). NAD(+) serves as cofactor.

It is found in the cytoplasm. The catalysed reaction is 7-phospho-2-dehydro-3-deoxy-D-arabino-heptonate = 3-dehydroquinate + phosphate. Its pathway is metabolic intermediate biosynthesis; chorismate biosynthesis; chorismate from D-erythrose 4-phosphate and phosphoenolpyruvate: step 2/7. Functionally, catalyzes the conversion of 3-deoxy-D-arabino-heptulosonate 7-phosphate (DAHP) to dehydroquinate (DHQ). This is 3-dehydroquinate synthase from Salinibacter ruber (strain DSM 13855 / M31).